The chain runs to 171 residues: Spiderine-2b (171 aa).

A signal peptide spans 1–18; sequence MKFALVLLGFCAFYLVNA. Residues 19–58 constitute a propeptide, removed in mature form; it reads TGDLETELEASDLQELQEALDLIAETPLESLEAEELEEAR. The segment at 59 to 104 is linear cationic cytotoxin domain; sequence KFKFPKINWGKLASKAKDVYKKGQKLAKNKNVKKALKYGKQLAENL. Residues 118 to 171 enclose the Oxytoxin-type inhibitor cystine knot (ICK) domain; it reads NNKCWAIGTRCTDDCDCCPEHHCHCPAKSWTFGLIPCSCQVTESDKVNKCPPAE. Cystine bridges form between Cys-121–Cys-135, Cys-128–Cys-140, Cys-132–Cys-167, Cys-134–Cys-156, and Cys-142–Cys-154.

Belongs to the spiderine family. Cationic/spiderine subfamily. Expressed by the venom gland.

It is found in the secreted. Functionally, has antimicrobial, insecticidal, cytolytic and cytotoxic activity. This chain is Spiderine-2b, found in Oxyopes takobius (Lynx spider).